The following is a 438-amino-acid chain: Serine--tRNA ligase (438 aa).

245–247 (TSE) provides a ligand contact to L-serine. Residue 276–278 (RSE) coordinates ATP. Glu299 contacts L-serine. Residue 363 to 366 (EISS) participates in ATP binding. Ser398 lines the L-serine pocket.

The protein belongs to the class-II aminoacyl-tRNA synthetase family. Type-1 seryl-tRNA synthetase subfamily. As to quaternary structure, homodimer. The tRNA molecule binds across the dimer.

Its subcellular location is the cytoplasm. The catalysed reaction is tRNA(Ser) + L-serine + ATP = L-seryl-tRNA(Ser) + AMP + diphosphate + H(+). It carries out the reaction tRNA(Sec) + L-serine + ATP = L-seryl-tRNA(Sec) + AMP + diphosphate + H(+). It participates in aminoacyl-tRNA biosynthesis; selenocysteinyl-tRNA(Sec) biosynthesis; L-seryl-tRNA(Sec) from L-serine and tRNA(Sec): step 1/1. Functionally, catalyzes the attachment of serine to tRNA(Ser). Is also able to aminoacylate tRNA(Sec) with serine, to form the misacylated tRNA L-seryl-tRNA(Sec), which will be further converted into selenocysteinyl-tRNA(Sec). The polypeptide is Serine--tRNA ligase (Verminephrobacter eiseniae (strain EF01-2)).